A 367-amino-acid chain; its full sequence is Peptide chain release factor 2 (367 aa).

Residue glutamine 254 is modified to N5-methylglutamine.

This sequence belongs to the prokaryotic/mitochondrial release factor family. In terms of processing, methylated by PrmC. Methylation increases the termination efficiency of RF2.

The protein resides in the cytoplasm. Functionally, peptide chain release factor 2 directs the termination of translation in response to the peptide chain termination codons UGA and UAA. The protein is Peptide chain release factor 2 of Neisseria gonorrhoeae (strain ATCC 700825 / FA 1090).